Reading from the N-terminus, the 247-residue chain is Adenosylcobinamide-GDP ribazoletransferase (247 aa).

A run of 6 helical transmembrane segments spans residues 34–54, 59–79, 113–133, 138–158, 171–193, and 197–219; these read IVMFPFIGLILGGVSGLIFIL, CGIPLAALFCILALALLTGGF, GGLALIFVLLAKILVVSELAL, MLAALAAACAAGRGSAVLLMY, VFIGKVSGRQTCITLGLAIIIAT, and PGMQGLAAMVVTCAAIFILGQLL.

The protein belongs to the CobS family. Mg(2+) is required as a cofactor.

It localises to the cell inner membrane. The catalysed reaction is alpha-ribazole + adenosylcob(III)inamide-GDP = adenosylcob(III)alamin + GMP + H(+). The enzyme catalyses alpha-ribazole 5'-phosphate + adenosylcob(III)inamide-GDP = adenosylcob(III)alamin 5'-phosphate + GMP + H(+). It participates in cofactor biosynthesis; adenosylcobalamin biosynthesis; adenosylcobalamin from cob(II)yrinate a,c-diamide: step 7/7. In terms of biological role, joins adenosylcobinamide-GDP and alpha-ribazole to generate adenosylcobalamin (Ado-cobalamin). Also synthesizes adenosylcobalamin 5'-phosphate from adenosylcobinamide-GDP and alpha-ribazole 5'-phosphate. The sequence is that of Adenosylcobinamide-GDP ribazoletransferase from Salmonella newport (strain SL254).